Here is a 373-residue protein sequence, read N- to C-terminus: MEVMQVLHMNRGNGENSYAKNSTVQSKIISIGKPIIEEAVHEISCNNVLESMGIADLGCSSGPNTLCVISEIMDMVQATSHRLGHPVPEFRLYLNDLYSNDFNSIFMSLPAFYHRLKEEKGIGCGSCFISGVAGSFYGRLFPSKSLHYVHSSSSLHWLSQVPPGLESNAVTPLNKGKVYISKSSPHSVLHAYSLQFQNDFPMFIESRSQELVSGGRMVLSLFGRRSTDPTTEESCYQWELLAQAIMSLVREGLIEEEKVDSFNTPFYAPCAEEIKVEIQKEGSFIIDRLEGFEIDWDGGAVSDVHTAQGKLLIGQRAAKALRAVVESMLESHFGIGQDIMDDLFSRYAEIVGNHLSKTRTKYFNLVISLTRKG.

Tyr18 is a binding site for S-adenosyl-L-homocysteine. Gln25 lines the jasmonate pocket. Cys59, Asn64, Asp96, Leu97, Ser135, and Phe136 together coordinate S-adenosyl-L-homocysteine. His156 and Trp157 together coordinate jasmonate. Mg(2+) contacts are provided by Asn174, Asp260, Phe262, and Asn263.

Belongs to the methyltransferase superfamily. Type-7 methyltransferase family. Mg(2+) serves as cofactor.

It localises to the cytoplasm. The protein localises to the nucleus. It carries out the reaction jasmonate + S-adenosyl-L-methionine = methyl (-)-jasmonate + S-adenosyl-L-homocysteine. Its pathway is lipid metabolism; oxylipin biosynthesis. Functionally, catalyzes the methylation of jasmonate into methyljasmonate, a plant volatile that acts as an important cellular regulator mediating diverse developmental processes and defense responses. The polypeptide is Probable jasmonic acid carboxyl methyltransferase 1 (Theobroma cacao (Cacao)).